A 98-amino-acid polypeptide reads, in one-letter code: uncharacterized protein (98 aa).

This is an uncharacterized protein from Archaeoglobus fulgidus (strain ATCC 49558 / DSM 4304 / JCM 9628 / NBRC 100126 / VC-16).